Consider the following 74-residue polypeptide: Anaphase-promoting complex subunit 13 (74 aa).

Belongs to the APC13 family. In terms of assembly, the APC/C is composed of at least 12 subunits.

It is found in the nucleus. It participates in protein modification; protein ubiquitination. Its function is as follows. Component of the anaphase promoting complex/cyclosome (APC/C), a cell cycle-regulated E3 ubiquitin ligase that controls progression through mitosis and the G1 phase of the cell cycle. The APC/C complex acts by mediating ubiquitination and subsequent degradation of target proteins: it mainly mediates the formation of 'Lys-11'-linked polyubiquitin chains and, to a lower extent, the formation of 'Lys-48'- and 'Lys-63'-linked polyubiquitin chains. The APC/C complex catalyzes assembly of branched 'Lys-11'-/'Lys-48'-linked branched ubiquitin chains on target proteins. The polypeptide is Anaphase-promoting complex subunit 13 (anapc13) (Xenopus tropicalis (Western clawed frog)).